The primary structure comprises 308 residues: GMP synthase [glutamine-hydrolyzing] subunit B (308 aa).

Positions 2 to 183 (LNPSDFIEEA…LGLPREMIQR (182 aa)) constitute a GMPS ATP-PPase domain. 29–35 (SGGVDSS) serves as a coordination point for ATP.

Heterodimer composed of a glutamine amidotransferase subunit (A) and a GMP-binding subunit (B).

The enzyme catalyses XMP + L-glutamine + ATP + H2O = GMP + L-glutamate + AMP + diphosphate + 2 H(+). It participates in purine metabolism; GMP biosynthesis; GMP from XMP (L-Gln route): step 1/1. Its function is as follows. Catalyzes the synthesis of GMP from XMP. The protein is GMP synthase [glutamine-hydrolyzing] subunit B (guaAB) of Methanothermobacter thermautotrophicus (strain ATCC 29096 / DSM 1053 / JCM 10044 / NBRC 100330 / Delta H) (Methanobacterium thermoautotrophicum).